Reading from the N-terminus, the 315-residue chain is Olfactory receptor 10A4 (315 aa).

Topologically, residues 1–26 (MMWENWTIVSEFVLVSFSALSTELQA) are extracellular. N-linked (GlcNAc...) asparagine glycosylation occurs at N5. Residues 27–47 (LLFLLFLTIYLVTLMGNVLII) traverse the membrane as a helical segment. Residues 48 to 55 (LVTIADSA) are Cytoplasmic-facing. Residues 56–76 (LQSPMYFFLRNLSFLEIGFNL) traverse the membrane as a helical segment. The Extracellular portion of the chain corresponds to 77 to 100 (VIVPKMLGTLIIQDTTISFLGCAT). C98 and C190 form a disulfide bridge. Residues 101 to 121 (QMYFFFFFGAAECCLLATMAY) form a helical membrane-spanning segment. The Cytoplasmic portion of the chain corresponds to 122 to 140 (DRYVAICDPLHYPVIMGHI). Residues 141-161 (SCAQLAAASWFSGFSVATVQT) form a helical membrane-spanning segment. Topologically, residues 162–198 (TWIFSFPFCGPNRVNHFFCDSPPVIALVCADTSVFEL) are extracellular. A helical transmembrane segment spans residues 199–218 (EALTATVLFILFPFLLILGS). Over 219–238 (YVRILSTIFRMPSAEGKHQA) the chain is Cytoplasmic. A helical transmembrane segment spans residues 239-259 (FSTCSAHLLVVSLFYSTAILT). The Extracellular segment spans residues 260-272 (YFRPQSSASSESK). Residues 273-293 (KLLSLSSTVVTPMLNPIIYSS) form a helical membrane-spanning segment. Over 294–315 (RNKEVKAALKRLIHRTLGSQKL) the chain is Cytoplasmic.

This sequence belongs to the G-protein coupled receptor 1 family. In terms of tissue distribution, expressed in the tongue.

It is found in the cell membrane. Odorant receptor (Potential). May be involved in taste perception. This chain is Olfactory receptor 10A4 (OR10A4), found in Homo sapiens (Human).